Reading from the N-terminus, the 789-residue chain is Polyribonucleotide nucleotidyltransferase (789 aa).

The Mg(2+) site is built by Asp494 and Asp500. A KH domain is found at 561-620; that stretch reads PRIESIFINKDKIRNVIGSGGKNIREICEKTGARVEIMQDGTVMIYAINNDAVEYAKNMI. The region spanning 630-697 is the S1 motif domain; sequence GKVFDGTVIE…DREYVQLSMR (68 aa). A disordered region spans residues 709–789; sequence GELYNIRKTN…NEVPRKPRFF (81 aa). A compositionally biased stretch (basic residues) spans 737–749; that stretch reads SEKKRRGSGRSRR. The span at 763–780 shows a compositional bias: low complexity; the sequence is NNGFGNGNRSFNDNRNGN.

It belongs to the polyribonucleotide nucleotidyltransferase family. Mg(2+) is required as a cofactor.

The protein localises to the cytoplasm. The catalysed reaction is RNA(n+1) + phosphate = RNA(n) + a ribonucleoside 5'-diphosphate. Its function is as follows. Involved in mRNA degradation. Catalyzes the phosphorolysis of single-stranded polyribonucleotides processively in the 3'- to 5'-direction. This is Polyribonucleotide nucleotidyltransferase from Ehrlichia ruminantium (strain Welgevonden).